The sequence spans 395 residues: S-adenosylmethionine synthase (395 aa).

Residue His16 coordinates ATP. Asp18 is a binding site for Mg(2+). Glu44 is a K(+) binding site. Residues Glu57 and Gln100 each contribute to the L-methionine site. A flexible loop region spans residues 100–110 (QSPDIAGGVNL). ATP is bound by residues 175–177 (DGK), 242–243 (RF), Asp251, 257–258 (RK), Ala274, and Lys278. Residue Asp251 coordinates L-methionine. Lys282 provides a ligand contact to L-methionine.

Belongs to the AdoMet synthase family. As to quaternary structure, homotetramer; dimer of dimers. Mg(2+) is required as a cofactor. The cofactor is K(+).

Its subcellular location is the cytoplasm. The catalysed reaction is L-methionine + ATP + H2O = S-adenosyl-L-methionine + phosphate + diphosphate. It participates in amino-acid biosynthesis; S-adenosyl-L-methionine biosynthesis; S-adenosyl-L-methionine from L-methionine: step 1/1. Its function is as follows. Catalyzes the formation of S-adenosylmethionine (AdoMet) from methionine and ATP. The overall synthetic reaction is composed of two sequential steps, AdoMet formation and the subsequent tripolyphosphate hydrolysis which occurs prior to release of AdoMet from the enzyme. This chain is S-adenosylmethionine synthase, found in Thermus thermophilus (strain ATCC BAA-163 / DSM 7039 / HB27).